The following is a 475-amino-acid chain: Ribulose bisphosphate carboxylase large chain (475 aa).

A propeptide spanning residues 1–2 (MS) is cleaved from the precursor. Position 3 is an N-acetylproline (P3). Residue K14 is modified to N6,N6,N6-trimethyllysine. Positions 123 and 173 each coordinate substrate. K175 serves as the catalytic Proton acceptor. K177 serves as a coordination point for substrate. Mg(2+) is bound by residues K201, D203, and E204. At K201 the chain carries N6-carboxylysine. Catalysis depends on H294, which acts as the Proton acceptor. 3 residues coordinate substrate: R295, H327, and S379.

The protein belongs to the RuBisCO large chain family. Type I subfamily. As to quaternary structure, heterohexadecamer of 8 large chains and 8 small chains; disulfide-linked. The disulfide link is formed within the large subunit homodimers. Mg(2+) is required as a cofactor. The disulfide bond which can form in the large chain dimeric partners within the hexadecamer appears to be associated with oxidative stress and protein turnover.

It is found in the plastid. Its subcellular location is the chloroplast. It carries out the reaction 2 (2R)-3-phosphoglycerate + 2 H(+) = D-ribulose 1,5-bisphosphate + CO2 + H2O. The catalysed reaction is D-ribulose 1,5-bisphosphate + O2 = 2-phosphoglycolate + (2R)-3-phosphoglycerate + 2 H(+). Its function is as follows. RuBisCO catalyzes two reactions: the carboxylation of D-ribulose 1,5-bisphosphate, the primary event in carbon dioxide fixation, as well as the oxidative fragmentation of the pentose substrate in the photorespiration process. Both reactions occur simultaneously and in competition at the same active site. This Chara vulgaris (Common stonewort) protein is Ribulose bisphosphate carboxylase large chain.